A 136-amino-acid polypeptide reads, in one-letter code: Ribonuclease P protein component (136 aa).

It belongs to the RnpA family. As to quaternary structure, consists of a catalytic RNA component (M1 or rnpB) and a protein subunit.

The enzyme catalyses Endonucleolytic cleavage of RNA, removing 5'-extranucleotides from tRNA precursor.. Its function is as follows. RNaseP catalyzes the removal of the 5'-leader sequence from pre-tRNA to produce the mature 5'-terminus. It can also cleave other RNA substrates such as 4.5S RNA. The protein component plays an auxiliary but essential role in vivo by binding to the 5'-leader sequence and broadening the substrate specificity of the ribozyme. This is Ribonuclease P protein component from Burkholderia pseudomallei (strain 1106a).